The sequence spans 21 residues: Conchiolin protein p20 (21 aa).

A compositionally biased stretch (low complexity) spans 1 to 14 (YQRXSRYYYYXGPP). The segment at 1–21 (YQRXSRYYYYXGPPDDIDDRY) is disordered.

This sequence belongs to the N16 matrix protein family. In terms of assembly, homooligomer; disulfide-linked. May also be disulfide-linked to insoluble organic matrix. Post-translationally, according to PubMed:11250534, amino acids 4 and 11 may be sulfated or phosphorylated. By similarity with the N14 matrix protein, amino-acid 4 may be a cysteine involved in a disulfide bond. Component of conchiolin, the organic matrix of nacre. Is dispersed in calcium carbonate and also linked by disulfide bonds to the organic core of nacre.

It is found in the secreted. The protein resides in the extracellular space. Its subcellular location is the extracellular matrix. In terms of biological role, may be specifically involved in the formation of the nacreous layer. The chain is Conchiolin protein p20 from Pinctada maxima (Silver-lipped pearl oyster).